The chain runs to 481 residues: Beta-amyrin 16-beta-monooxygenase (481 aa).

The chain crosses the membrane as a helical span at residues 4 to 24 (LFIIISLVIVILTTIFILSNL). Residue Cys428 coordinates heme.

The protein belongs to the cytochrome P450 family. Requires heme as cofactor. In terms of tissue distribution, highly expressed in roots. Expressed at very low levels in leaves and petals.

Its subcellular location is the membrane. It carries out the reaction beta-amyrin + reduced [NADPH--hemoprotein reductase] + O2 = maniladiol + oxidized [NADPH--hemoprotein reductase] + H2O + H(+). The enzyme catalyses oleanolate + reduced [NADPH--hemoprotein reductase] + O2 = cochalate + oxidized [NADPH--hemoprotein reductase] + H2O + H(+). Involved in triterpenoid saponin biosynthesis in roots. Catalyzes the hydroxylation of beta-amyrin at the C-16 beta position to form maniladiol. Is also able to oxidize oleanolat to cochalate. Has weak activity catalyzing the three-step oxidation at C-28 of beta-amyrin to form oleanolate. This chain is Beta-amyrin 16-beta-monooxygenase, found in Platycodon grandiflorus (Balloon flower).